A 377-amino-acid chain; its full sequence is tRNA(Met) cytidine acetate ligase (377 aa).

ATP-binding positions include 7–20 (VVEY…HRYH), glycine 101, asparagine 151, and arginine 176.

This sequence belongs to the TmcAL family.

Its subcellular location is the cytoplasm. It catalyses the reaction cytidine(34) in elongator tRNA(Met) + acetate + ATP = N(4)-acetylcytidine(34) in elongator tRNA(Met) + AMP + diphosphate. Its function is as follows. Catalyzes the formation of N(4)-acetylcytidine (ac(4)C) at the wobble position of elongator tRNA(Met), using acetate and ATP as substrates. First activates an acetate ion to form acetyladenylate (Ac-AMP) and then transfers the acetyl group to tRNA to form ac(4)C34. In Limosilactobacillus reuteri (strain DSM 20016) (Lactobacillus reuteri), this protein is tRNA(Met) cytidine acetate ligase.